We begin with the raw amino-acid sequence, 247 residues long: Sugar fermentation stimulation protein homolog (247 aa).

It belongs to the SfsA family.

The protein is Sugar fermentation stimulation protein homolog of Aeromonas salmonicida (strain A449).